A 331-amino-acid chain; its full sequence is Putative type II secretion system C-type protein YghF (331 aa).

Residues 44 to 60 (MFWLMLLIISAKMAHSL) form a helical membrane-spanning segment.

Belongs to the GSP C family.

The protein resides in the cell inner membrane. Involved in a type II secretion system (T2SS, formerly general secretion pathway, GSP) for the export of folded proteins across the outer membrane. The chain is Putative type II secretion system C-type protein YghF from Escherichia coli (strain K12).